The following is an 876-amino-acid chain: Alanine--tRNA ligase (876 aa).

Zn(2+) is bound by residues His-565, His-569, Cys-667, and His-671.

This sequence belongs to the class-II aminoacyl-tRNA synthetase family. It depends on Zn(2+) as a cofactor.

The protein localises to the cytoplasm. It carries out the reaction tRNA(Ala) + L-alanine + ATP = L-alanyl-tRNA(Ala) + AMP + diphosphate. Functionally, catalyzes the attachment of alanine to tRNA(Ala) in a two-step reaction: alanine is first activated by ATP to form Ala-AMP and then transferred to the acceptor end of tRNA(Ala). Also edits incorrectly charged Ser-tRNA(Ala) and Gly-tRNA(Ala) via its editing domain. This Staphylococcus aureus (strain USA300) protein is Alanine--tRNA ligase.